The chain runs to 318 residues: tRNA U34 carboxymethyltransferase (318 aa).

Residues lysine 88, tryptophan 102, lysine 107, glycine 126, methionine 192, tyrosine 196, and arginine 311 each coordinate carboxy-S-adenosyl-L-methionine.

It belongs to the class I-like SAM-binding methyltransferase superfamily. CmoB family. In terms of assembly, homotetramer.

It carries out the reaction carboxy-S-adenosyl-L-methionine + 5-hydroxyuridine(34) in tRNA = 5-carboxymethoxyuridine(34) in tRNA + S-adenosyl-L-homocysteine + H(+). Its function is as follows. Catalyzes carboxymethyl transfer from carboxy-S-adenosyl-L-methionine (Cx-SAM) to 5-hydroxyuridine (ho5U) to form 5-carboxymethoxyuridine (cmo5U) at position 34 in tRNAs. This Pseudomonas fluorescens (strain ATCC BAA-477 / NRRL B-23932 / Pf-5) protein is tRNA U34 carboxymethyltransferase.